Reading from the N-terminus, the 166-residue chain is Mitochondrial translation release factor in rescue (166 aa).

A mitochondrion-targeting transit peptide spans 1 to 35; that stretch reads MSTVGLFHFPTPLTRICPAPWGLRLWEKLTLLSPG. Positions 57–121 are GGQ domain; the sequence is ENELEEQFVK…LQEKVDVFYN (65 aa). The GGQ signature appears at 71-73; sequence GGQ. Gln-73 is subject to N5-methylglutamine. The interval 122–148 is disordered; the sequence is GENSPVHKEKREAAKKKQERKKRAKET. The span at 126 to 137 shows a compositional bias: basic and acidic residues; the sequence is PVHKEKREAAKK. Residues 127–160 adopt a coiled-coil conformation; sequence VHKEKREAAKKKQERKKRAKETLEKKKLLKELWE.

It belongs to the prokaryotic/mitochondrial release factor family. As to quaternary structure, interacts (via C-terminus) with MTRES1 (via S4 domain). Associates with mitoribosomal S39 large subunit, peptidyl tRNA and nascent chain. Methylation of glutamine in the GGQ triplet by HEMK1. In terms of tissue distribution, expressed in all areas of the brain tested.

It is found in the mitochondrion. Part of a mitoribosome-associated quality control pathway that prevents aberrant translation by responding to interruptions during elongation. As heterodimer with MTRES1, ejects the unfinished nascent chain and peptidyl transfer RNA (tRNA), respectively, from stalled ribosomes. Recruitment of mitoribosome biogenesis factors to these quality control intermediates suggests additional roles for MTRES1 and MTRF during mitoribosome rescue. The sequence is that of Mitochondrial translation release factor in rescue from Homo sapiens (Human).